The following is a 346-amino-acid chain: [LysW]-lysine/[LysW]-ornithine hydrolase (346 aa).

His-67 contributes to the Zn(2+) binding site. The active site involves Asp-69. Residue Asp-91 coordinates Zn(2+). Glu-121 (proton acceptor) is an active-site residue. 3 residues coordinate Zn(2+): Glu-122, Glu-145, and His-316.

The protein belongs to the peptidase M20A family. LysK subfamily. Requires Zn(2+) as cofactor. Co(2+) serves as cofactor.

It is found in the cytoplasm. It catalyses the reaction [amino-group carrier protein]-C-terminal-gamma-(L-lysyl)-L-glutamate + H2O = [amino-group carrier protein]-C-terminal-L-glutamate + L-lysine. It carries out the reaction [amino-group carrier protein]-C-terminal-gamma-(L-ornithyl)-L-glutamate + H2O = [amino-group carrier protein]-C-terminal-L-glutamate + L-ornithine. It participates in amino-acid biosynthesis; L-lysine biosynthesis via AAA pathway; L-lysine from L-alpha-aminoadipate (Thermus route): step 5/5. It functions in the pathway amino-acid biosynthesis; L-arginine biosynthesis. In terms of biological role, catalyzes the release of L-lysine from [LysW]-gamma-L-lysine and the release of L-ornithine from [LysW]-L-ornithine. The polypeptide is [LysW]-lysine/[LysW]-ornithine hydrolase (Sulfurisphaera tokodaii (strain DSM 16993 / JCM 10545 / NBRC 100140 / 7) (Sulfolobus tokodaii)).